Here is a 211-residue protein sequence, read N- to C-terminus: Dephospho-CoA kinase (211 aa).

Residues 3-206 enclose the DPCK domain; that stretch reads VLGLTGGIGS…PGMKGPDPHA (204 aa). 11–16 serves as a coordination point for ATP; the sequence is GSGKSI.

Belongs to the CoaE family.

The protein localises to the cytoplasm. It carries out the reaction 3'-dephospho-CoA + ATP = ADP + CoA + H(+). The protein operates within cofactor biosynthesis; coenzyme A biosynthesis; CoA from (R)-pantothenate: step 5/5. Its function is as follows. Catalyzes the phosphorylation of the 3'-hydroxyl group of dephosphocoenzyme A to form coenzyme A. The protein is Dephospho-CoA kinase of Syntrophotalea carbinolica (strain DSM 2380 / NBRC 103641 / GraBd1) (Pelobacter carbinolicus).